A 105-amino-acid polypeptide reads, in one-letter code: Large ribosomal subunit protein P2 (105 aa).

The protein belongs to the eukaryotic ribosomal protein P1/P2 family. As to quaternary structure, P1 and P2 exist as dimers at the large ribosomal subunit. Phosphorylated.

Functionally, plays an important role in the elongation step of protein synthesis. This chain is Large ribosomal subunit protein P2 (LIP2), found in Leishmania braziliensis.